Here is a 220-residue protein sequence, read N- to C-terminus: Probable pterin-4-alpha-carbinolamine dehydratase, chloroplastic (220 aa).

A chloroplast-targeting transit peptide spans 1 to 50; it reads MAATSSSPPCNISASSLLLRQPSRSILKVFGLLPPVSRNNRKLGRLTVTR.

Belongs to the pterin-4-alpha-carbinolamine dehydratase family. Interacts with SDIR1. Interacts with AIRP2. Ubiquitinated by SDIR1. Ubiquitination leads to its subsequent degradation, thus controlling abscisic acid (ABA) signaling. Ubiquitinated by AIRP2. Ubiquitination leads to its subsequent degradation, thus controlling abscisic acid (ABA) signaling during drought stress.

It localises to the plastid. The protein resides in the chloroplast. The protein localises to the cell membrane. It is found in the nucleus. It carries out the reaction (4aS,6R)-4a-hydroxy-L-erythro-5,6,7,8-tetrahydrobiopterin = (6R)-L-erythro-6,7-dihydrobiopterin + H2O. Its function is as follows. Involved in tetrahydrobiopterin biosynthesis. Interacts with and acts downstream of the E3 ubiquitin-protein ligase SDIR1 in abscisic acid (ABA) and salt stress signaling. Regulates the expression of the bZIP transcription factor ABI5, which mediates responses to ABA during seed germination and salt stress. The SDIR1-ATP1/SDIRIP1 complex plays an important role in ABA signaling through the ubiquitination pathway. Acts downstream of AIRP2 in regulation of ABA signaling during drought stress. This chain is Probable pterin-4-alpha-carbinolamine dehydratase, chloroplastic, found in Arabidopsis thaliana (Mouse-ear cress).